Reading from the N-terminus, the 108-residue chain is uncharacterized protein (108 aa).

Positions 7-106 (CPRFEKAVDI…WATEWIDPSF (100 aa)) constitute an HTH hxlR-type domain.

This is an uncharacterized protein from Bacillus subtilis (strain 168).